The following is a 164-amino-acid chain: Protein SprT (164 aa).

The SprT-like domain maps to 14 to 156 (QLAESFFKRP…LCRRCRQTLV (143 aa)). Histidine 69 serves as a coordination point for Zn(2+). Residue glutamate 70 is part of the active site. A Zn(2+)-binding site is contributed by histidine 73.

The protein belongs to the SprT family. It depends on Zn(2+) as a cofactor.

The protein resides in the cytoplasm. The chain is Protein SprT from Pseudomonas fluorescens (strain ATCC BAA-477 / NRRL B-23932 / Pf-5).